A 353-amino-acid chain; its full sequence is F-box protein At2g14290 (353 aa).

Residues 6-58 form the F-box domain; the sequence is PRTWSELPPDLLGSIFHRLSFTDFHRAKIVCWNWNLSSKLTVPKKIRSPWLML.

The polypeptide is F-box protein At2g14290 (Arabidopsis thaliana (Mouse-ear cress)).